The chain runs to 657 residues: Pyoverdine export ATP-binding/permease protein PvdT (657 aa).

Residues 6–245 (IDLRNIRKSY…LSANAGALQA (240 aa)) enclose the ABC transporter domain. 43–50 (GASGSGKS) contributes to the ATP binding site. 4 consecutive transmembrane segments (helical) span residues 285–305 (ALTL…LAVG), 532–552 (LSLM…IGVM), 590–610 (LSVV…GILI), and 620–640 (LAAV…FGFM).

Belongs to the ABC transporter superfamily. Macrolide exporter (TC 3.A.1.122) family. Part of the tripartite efflux system PvdRT-OpmQ, which is composed of an inner membrane component with both ATPase and permease domains, PvdT, a periplasmic membrane fusion protein, PvdR, and an outer membrane component, OpmQ.

It is found in the cell inner membrane. Its function is as follows. Part of the tripartite efflux system PvdRT-OpmQ required for the secretion into the extracellular milieu of the siderophore pyoverdine (PVD), which is involved in iron acquisition. This subunit binds PVD and drives its secretion by hydrolyzing ATP. The system is responsible for export of newly synthesized PVD after the final steps of biosynthesis have taken place in the periplasm. It is also responsible for recycling of PVD after internalization of ferri-PVD into the periplasm by the outer-membrane receptor FpvA and release of iron from PVD, thus making PVD available for new cycles of iron uptake. This is Pyoverdine export ATP-binding/permease protein PvdT from Pseudomonas fluorescens (strain ATCC BAA-477 / NRRL B-23932 / Pf-5).